A 60-amino-acid chain; its full sequence is Adenylate kinase isoenzyme 1 (60 aa).

9–14 is a binding site for ATP; sequence GSGKGT. Position 25 is a phosphoserine (Ser25). Positions 25 to 53 are NMP; that stretch reads STGDLLRVDSSNGFLIDGYPRQGEEFERK. Positions 26 and 31 each coordinate AMP.

This sequence belongs to the adenylate kinase family. AK1 subfamily. In terms of assembly, monomer. Requires Mg(2+) as cofactor.

The protein resides in the cytoplasm. It catalyses the reaction a ribonucleoside 5'-phosphate + ATP = a ribonucleoside 5'-diphosphate + ADP. It carries out the reaction AMP + ATP = 2 ADP. The catalysed reaction is dAMP + ATP = dADP + ADP. The enzyme catalyses dATP + AMP = dADP + ADP. It catalyses the reaction dAMP + dATP = 2 dADP. It carries out the reaction a 2'-deoxyribonucleoside 5'-diphosphate + ATP = a 2'-deoxyribonucleoside 5'-triphosphate + ADP. The catalysed reaction is a ribonucleoside 5'-diphosphate + ATP = a ribonucleoside 5'-triphosphate + ADP. The enzyme catalyses CDP + GTP = CTP + GDP. It catalyses the reaction GDP + ATP = GTP + ADP. It carries out the reaction UDP + ATP = UTP + ADP. The catalysed reaction is GTP + UDP = UTP + GDP. The enzyme catalyses dTDP + GTP = dTTP + GDP. It catalyses the reaction dCDP + GTP = dCTP + GDP. It carries out the reaction dGDP + ATP = dGTP + ADP. The catalysed reaction is dADP + GTP = dATP + GDP. The enzyme catalyses thiamine diphosphate + ADP = thiamine triphosphate + AMP. Its function is as follows. Catalyzes the reversible transfer of the terminal phosphate group between ATP and AMP. Also displays broad nucleoside diphosphate kinase activity. Plays an important role in cellular energy homeostasis and in adenine nucleotide metabolism. Also catalyzes at a very low rate the synthesis of thiamine triphosphate (ThTP) from thiamine diphosphate (ThDP) and ADP. This Mesocricetus auratus (Golden hamster) protein is Adenylate kinase isoenzyme 1 (Ak1).